Here is a 213-residue protein sequence, read N- to C-terminus: Adenylate kinase (213 aa).

Position 10–15 (glycine 10–threonine 15) interacts with ATP. An NMP region spans residues serine 30–valine 59. Residues threonine 31, arginine 36, aspartate 57–valine 59, glycine 86–arginine 89, and glutamine 93 each bind AMP. Residues glycine 127 to aspartate 160 are LID. ATP-binding positions include arginine 128 and threonine 137–phenylalanine 138. Arginine 157 and arginine 168 together coordinate AMP. ATP is bound at residue glutamine 196.

The protein belongs to the adenylate kinase family. Monomer.

It is found in the cytoplasm. It catalyses the reaction AMP + ATP = 2 ADP. Its pathway is purine metabolism; AMP biosynthesis via salvage pathway; AMP from ADP: step 1/1. In terms of biological role, catalyzes the reversible transfer of the terminal phosphate group between ATP and AMP. Plays an important role in cellular energy homeostasis and in adenine nucleotide metabolism. The chain is Adenylate kinase from Streptococcus suis (strain 98HAH33).